Reading from the N-terminus, the 511-residue chain is Maturase K (511 aa).

Belongs to the intron maturase 2 family. MatK subfamily.

Its subcellular location is the plastid. The protein localises to the chloroplast. Usually encoded in the trnK tRNA gene intron. Probably assists in splicing its own and other chloroplast group II introns. In Diplacus aurantiacus (Orange bush monkey flower), this protein is Maturase K.